A 728-amino-acid chain; its full sequence is Tripartite terminase subunit 1 (728 aa).

Residues 186–214 (CASCFAEAAMLPNQGESVLSMLAAVNCNH) form a C3H1-type zinc finger. The tract at residues 239 to 278 (ARAAGRAGGGRESERRGREDADDEEDDEEEPRDGQGDAGD) is disordered. Positions 247–257 (GGRESERRGRE) are enriched in basic and acidic residues. Acidic residues predominate over residues 258–269 (DADDEEDDEEEP). 653-660 (YNRVWEKS) contributes to the ATP binding site.

It belongs to the herpesviridae TRM1 protein family. Associates with TRM2 and TRM3 to form the tripartite terminase complex. Interacts with portal protein.

The protein resides in the host nucleus. Component of the molecular motor that translocates viral genomic DNA in empty capsid during DNA packaging. Forms a tripartite terminase complex together with TRM2 and TRM3 in the host cytoplasm. Once the complex reaches the host nucleus, it interacts with the capsid portal vertex. This portal forms a ring in which genomic DNA is translocated into the capsid. TRM1 carries an endonuclease activity that plays an important role for the cleavage of concatemeric viral DNA into unit length genomes. In Equine herpesvirus 2 (strain 86/87) (EHV-2), this protein is Tripartite terminase subunit 1.